The sequence spans 328 residues: Biotin synthase (328 aa).

The region spanning 48 to 278 is the Radical SAM core domain; it reads FTGNSASLCS…GKSLSVCGGR (231 aa). [4Fe-4S] cluster contacts are provided by cysteine 66, cysteine 70, and cysteine 73. The [2Fe-2S] cluster site is built by serine 143 and cysteine 203.

Belongs to the radical SAM superfamily. Biotin synthase family. As to quaternary structure, homodimer. The cofactor is [4Fe-4S] cluster. Requires [2Fe-2S] cluster as cofactor.

It catalyses the reaction (4R,5S)-dethiobiotin + (sulfur carrier)-SH + 2 reduced [2Fe-2S]-[ferredoxin] + 2 S-adenosyl-L-methionine = (sulfur carrier)-H + biotin + 2 5'-deoxyadenosine + 2 L-methionine + 2 oxidized [2Fe-2S]-[ferredoxin]. It participates in cofactor biosynthesis; biotin biosynthesis; biotin from 7,8-diaminononanoate: step 2/2. Functionally, catalyzes the conversion of dethiobiotin (DTB) to biotin by the insertion of a sulfur atom into dethiobiotin via a radical-based mechanism. The protein is Biotin synthase of Pelobacter propionicus (strain DSM 2379 / NBRC 103807 / OttBd1).